Consider the following 641-residue polypeptide: Protein zwilch (641 aa).

Ser-312 is modified (phosphoserine).

It belongs to the ZWILCH family. In terms of assembly, component of the RZZ complex composed of rod, Zw10 and Zwilch.

Its subcellular location is the cytoplasm. It is found in the chromosome. The protein localises to the centromere. It localises to the kinetochore. The protein resides in the cytoskeleton. Its subcellular location is the spindle. In terms of biological role, essential component of the mitotic checkpoint, which prevents cells from prematurely exiting mitosis. Required for the assembly of the dynein-dynactin, Mad2 complexes and spindly/CG15415 onto kinetochores. Its function related to the spindle assembly machinery is proposed to depend on its association in the RZZ complex. Failure to assemble the complex due to the absence of any one of its components, results in the incorrect redistribution of the remaining components to diverse membrane compartments. The sequence is that of Protein zwilch from Drosophila melanogaster (Fruit fly).